The chain runs to 172 residues: Small ribosomal subunit protein uS5 (172 aa).

The S5 DRBM domain occupies 16–79; it reads LKDRLVAINR…ESAKKNLTRV (64 aa).

This sequence belongs to the universal ribosomal protein uS5 family. As to quaternary structure, part of the 30S ribosomal subunit. Contacts proteins S4 and S8.

Its function is as follows. With S4 and S12 plays an important role in translational accuracy. Located at the back of the 30S subunit body where it stabilizes the conformation of the head with respect to the body. This is Small ribosomal subunit protein uS5 from Bacteroides fragilis (strain ATCC 25285 / DSM 2151 / CCUG 4856 / JCM 11019 / LMG 10263 / NCTC 9343 / Onslow / VPI 2553 / EN-2).